The chain runs to 626 residues: DNA-directed RNA polymerase subunit gamma (626 aa).

4 residues coordinate Zn(2+): cysteine 71, cysteine 73, cysteine 86, and cysteine 89. Mg(2+) contacts are provided by aspartate 467, aspartate 469, and aspartate 471.

Belongs to the RNA polymerase beta' chain family. RpoC1 subfamily. In cyanobacteria the RNAP catalytic core is composed of 2 alpha, 1 beta, 1 beta', 1 gamma and 1 omega subunit. When a sigma factor is associated with the core the holoenzyme is formed, which can initiate transcription. The cofactor is Mg(2+). It depends on Zn(2+) as a cofactor.

It carries out the reaction RNA(n) + a ribonucleoside 5'-triphosphate = RNA(n+1) + diphosphate. Functionally, DNA-dependent RNA polymerase catalyzes the transcription of DNA into RNA using the four ribonucleoside triphosphates as substrates. This Synechocystis sp. (strain ATCC 27184 / PCC 6803 / Kazusa) protein is DNA-directed RNA polymerase subunit gamma.